A 272-amino-acid chain; its full sequence is Cell division protein FtsQ (272 aa).

The Cytoplasmic portion of the chain corresponds to 1 to 43 (MEYNPPNTRERIVARRQRMRRNSTEPVVPGWRWRLREGLRSGR). A helical membrane pass occupies residues 44-64 (IVSGIVFVISCFALFYVLFSS). Residues 65–272 (RFRVQTVEVV…FYQYRPDGSS (208 aa)) are Extracellular-facing. Residues 66–133 (FRVQTVEVVG…DRARIVIVER (68 aa)) enclose the POTRA domain.

The protein belongs to the FtsQ/DivIB family. FtsQ subfamily.

The protein resides in the cell membrane. In terms of biological role, essential cell division protein. In Chloroflexus aurantiacus (strain ATCC 29366 / DSM 635 / J-10-fl), this protein is Cell division protein FtsQ.